The following is a 144-amino-acid chain: Succinate dehydrogenase cytochrome b560 subunit (144 aa).

A run of 3 helical transmembrane segments spans residues 40–60 (IFHRITGGVLALTLCFFILIL), 84–104 (GFLFIAISFFLLLFIFYHLFA), and 124–144 (LTGYIMLGLAFLFTLIAWIIF). His101 contacts heme.

Belongs to the cytochrome b560 family. As to quaternary structure, forms part of complex II containing four subunits: a 70 kDa flavoprotein (FP), a 27 kDa iron-sulfur protein (IP), a cytochrome B and a membrane-anchoring protein. The cofactor is heme.

It is found in the mitochondrion inner membrane. Its pathway is carbohydrate metabolism; tricarboxylic acid cycle. Membrane-anchoring subunit of succinate dehydrogenase (SDH) that is involved in complex II of the mitochondrial electron transport chain and is responsible for transferring electrons from succinate to ubiquinone (coenzyme Q). This Reclinomonas americana protein is Succinate dehydrogenase cytochrome b560 subunit (SDH3).